The following is a 312-amino-acid chain: Glyoxylate/hydroxypyruvate reductase A (312 aa).

The active site involves Arg227. His275 acts as the Proton donor in catalysis.

It belongs to the D-isomer specific 2-hydroxyacid dehydrogenase family. GhrA subfamily.

It localises to the cytoplasm. The catalysed reaction is glycolate + NADP(+) = glyoxylate + NADPH + H(+). It carries out the reaction (R)-glycerate + NAD(+) = 3-hydroxypyruvate + NADH + H(+). It catalyses the reaction (R)-glycerate + NADP(+) = 3-hydroxypyruvate + NADPH + H(+). Catalyzes the NADPH-dependent reduction of glyoxylate and hydroxypyruvate into glycolate and glycerate, respectively. The polypeptide is Glyoxylate/hydroxypyruvate reductase A (Escherichia coli O6:K15:H31 (strain 536 / UPEC)).